A 181-amino-acid chain; its full sequence is Deoxyuridine 5'-triphosphate nucleotidohydrolase (181 aa).

Residues 96–98, asparagine 109, 113–115, and lysine 123 contribute to the substrate site; these read RSG and TVD.

Belongs to the dUTPase family. Mg(2+) is required as a cofactor.

The enzyme catalyses dUTP + H2O = dUMP + diphosphate + H(+). It functions in the pathway pyrimidine metabolism; dUMP biosynthesis; dUMP from dCTP (dUTP route): step 2/2. This enzyme is involved in nucleotide metabolism: it produces dUMP, the immediate precursor of thymidine nucleotides and it decreases the intracellular concentration of dUTP so that uracil cannot be incorporated into DNA. The sequence is that of Deoxyuridine 5'-triphosphate nucleotidohydrolase from Corynebacterium efficiens (strain DSM 44549 / YS-314 / AJ 12310 / JCM 11189 / NBRC 100395).